We begin with the raw amino-acid sequence, 718 residues long: Pullulanase (718 aa).

D406 functions as the Nucleophile in the catalytic mechanism. The active-site Proton donor is E435.

Belongs to the glycosyl hydrolase 13 family.

The enzyme catalyses Hydrolysis of (1-&gt;6)-alpha-D-glucosidic linkages in pullulan, amylopectin and glycogen, and in the alpha- and beta-limit dextrins of amylopectin and glycogen.. This is Pullulanase (amyX) from Bacillus subtilis (strain 168).